The following is a 378-amino-acid chain: Probable protein phosphatase 2C 55 (378 aa).

Disordered stretches follow at residues 1–59 and 79–115; these read MRRH…ASKG and EGEASSRGPAASRGGRRGRNSKRQPPRSRFDGDGVGC. Low complexity predominate over residues 7-26; sequence LGLLRRAAASSTSAASSRAG. Positions 92 to 104 are enriched in basic residues; the sequence is GGRRGRNSKRQPP. One can recognise a PPM-type phosphatase domain in the interval 122 to 369; the sequence is SWGYSSFQGR…DNVTCIVLQF (248 aa). Residues D158, G159, D321, and D360 each contribute to the Mn(2+) site.

Belongs to the PP2C family. Mg(2+) serves as cofactor. Mn(2+) is required as a cofactor.

The catalysed reaction is O-phospho-L-seryl-[protein] + H2O = L-seryl-[protein] + phosphate. It catalyses the reaction O-phospho-L-threonyl-[protein] + H2O = L-threonyl-[protein] + phosphate. This Oryza sativa subsp. japonica (Rice) protein is Probable protein phosphatase 2C 55.